Consider the following 717-residue polypeptide: Fatty acid oxidation complex subunit alpha (717 aa).

Residues 1–190 (MIHAGNAITV…KDGAVDAVVA (190 aa)) form an enoyl-CoA hydratase/isomerase region. Substrate is bound at residue Asp-298. Residues 313–717 (HPVNQAAVLG…MAANNKKFYG (405 aa)) are 3-hydroxyacyl-CoA dehydrogenase. NAD(+) contacts are provided by residues Met-326, Asp-345, 402-404 (VTE), Lys-409, and Ser-431. Residue His-452 is the For 3-hydroxyacyl-CoA dehydrogenase activity of the active site. An NAD(+)-binding site is contributed by Asn-455. Asn-502 is a substrate binding site.

It in the N-terminal section; belongs to the enoyl-CoA hydratase/isomerase family. This sequence in the C-terminal section; belongs to the 3-hydroxyacyl-CoA dehydrogenase family. Heterotetramer of two alpha chains (FadB) and two beta chains (FadA).

The catalysed reaction is a (3S)-3-hydroxyacyl-CoA + NAD(+) = a 3-oxoacyl-CoA + NADH + H(+). The enzyme catalyses a (3S)-3-hydroxyacyl-CoA = a (2E)-enoyl-CoA + H2O. It carries out the reaction a 4-saturated-(3S)-3-hydroxyacyl-CoA = a (3E)-enoyl-CoA + H2O. It catalyses the reaction (3S)-3-hydroxybutanoyl-CoA = (3R)-3-hydroxybutanoyl-CoA. The catalysed reaction is a (3Z)-enoyl-CoA = a 4-saturated (2E)-enoyl-CoA. The enzyme catalyses a (3E)-enoyl-CoA = a 4-saturated (2E)-enoyl-CoA. It participates in lipid metabolism; fatty acid beta-oxidation. Functionally, involved in the aerobic and anaerobic degradation of long-chain fatty acids via beta-oxidation cycle. Catalyzes the formation of 3-oxoacyl-CoA from enoyl-CoA via L-3-hydroxyacyl-CoA. It can also use D-3-hydroxyacyl-CoA and cis-3-enoyl-CoA as substrate. In Acinetobacter baumannii (strain ACICU), this protein is Fatty acid oxidation complex subunit alpha.